The chain runs to 441 residues: 3-phosphoshikimate 1-carboxyvinyltransferase (441 aa).

3-phosphoshikimate is bound by residues lysine 26, serine 27, and arginine 31. Lysine 26 is a binding site for phosphoenolpyruvate. 2 residues coordinate phosphoenolpyruvate: glycine 99 and arginine 127. The 3-phosphoshikimate site is built by serine 173, serine 174, glutamine 175, serine 203, aspartate 320, and lysine 347. Residue glutamine 175 coordinates phosphoenolpyruvate. Catalysis depends on aspartate 320, which acts as the Proton acceptor. Positions 351, 393, and 423 each coordinate phosphoenolpyruvate.

This sequence belongs to the EPSP synthase family. In terms of assembly, monomer.

The protein localises to the cytoplasm. It catalyses the reaction 3-phosphoshikimate + phosphoenolpyruvate = 5-O-(1-carboxyvinyl)-3-phosphoshikimate + phosphate. It participates in metabolic intermediate biosynthesis; chorismate biosynthesis; chorismate from D-erythrose 4-phosphate and phosphoenolpyruvate: step 6/7. Functionally, catalyzes the transfer of the enolpyruvyl moiety of phosphoenolpyruvate (PEP) to the 5-hydroxyl of shikimate-3-phosphate (S3P) to produce enolpyruvyl shikimate-3-phosphate and inorganic phosphate. This Janthinobacterium sp. (strain Marseille) (Minibacterium massiliensis) protein is 3-phosphoshikimate 1-carboxyvinyltransferase.